Here is a 196-residue protein sequence, read N- to C-terminus: Potassium-transporting ATPase KdpC subunit (196 aa).

Residues 7 to 27 (PAIVSAGLFTVLLGLAYPLAV) form a helical membrane-spanning segment.

The protein belongs to the KdpC family. In terms of assembly, the system is composed of three essential subunits: KdpA, KdpB and KdpC.

The protein resides in the cell inner membrane. Its function is as follows. Part of the high-affinity ATP-driven potassium transport (or Kdp) system, which catalyzes the hydrolysis of ATP coupled with the electrogenic transport of potassium into the cytoplasm. This subunit acts as a catalytic chaperone that increases the ATP-binding affinity of the ATP-hydrolyzing subunit KdpB by the formation of a transient KdpB/KdpC/ATP ternary complex. In Caulobacter sp. (strain K31), this protein is Potassium-transporting ATPase KdpC subunit.